The following is a 415-amino-acid chain: 2-oxoadipate dioxygenase/decarboxylase (415 aa).

2-oxoadipate is bound by residues His-66, Arg-70, and His-225. His-66 contacts Fe(2+). Fe(2+)-binding residues include His-225 and Glu-296. Ala-361 is a binding site for 2-oxoadipate.

It belongs to the 2-oxoadipate dioxygenase/decarboxylase family. It depends on Fe(2+) as a cofactor.

It carries out the reaction 2-oxoadipate + O2 = (R)-2-hydroxyglutarate + CO2. Functionally, catalyzes the decarboxylation and hydroxylation of 2-oxoadipate (2OA) to form D-2-hydroxyglutarate (D-2-HGA). The protein is 2-oxoadipate dioxygenase/decarboxylase of Mycobacterium bovis (strain ATCC BAA-935 / AF2122/97).